Consider the following 971-residue polypeptide: Endoplasmic reticulum calcium ATPase srcA (971 aa).

The Cytoplasmic portion of the chain corresponds to 1 to 25; it reads MNNEALAEDPPTPLWELVLEQFKDQ. The helical transmembrane segment at 26–46 threads the bilayer; it reads LVLILLGSAAVSFVLALFEEG. Residues 47–49 are Lumenal-facing; sequence DDW. Residues 50–70 form a helical membrane-spanning segment; the sequence is TAFVDPVVILTILILNAVVGV. The Cytoplasmic segment spans residues 71 to 217; it reads TQESSAEKAI…PTPLKQKLND (147 aa). The chain crosses the membrane as a helical span at residues 218–238; sequence FGDMLAKVITVICVLVWLINV. Over 239-262 the chain is Lumenal; the sequence is EHFNDPAHGGWAKGAIYYLKIAVS. Residues 263-283 form a helical membrane-spanning segment; that stretch reads LGVAAIPEGLAVVITTCLALG. Ca(2+) is bound by residues valine 265, alanine 266, isoleucine 268, and glutamate 270. At 284–718 the chain is on the cytoplasmic side; sequence TRKMAAKNAV…GRSIYSNTQQ (435 aa). The active-site 4-aspartylphosphate intermediate is aspartate 312. The Mg(2+) site is built by aspartate 312 and threonine 314. ATP contacts are provided by threonine 314, glutamate 402, arginine 453, lysine 473, arginine 518, arginine 637, and lysine 643. Aspartate 662 is a binding site for Mg(2+). Residue asparagine 665 coordinates ATP. The chain crosses the membrane as a helical span at residues 719 to 741; sequence FIRYLISSNIGEVVSIFLTAALG. Ca(2+) contacts are provided by asparagine 727 and glutamate 730. The Lumenal portion of the chain corresponds to 742 to 750; it reads MPEALIPVQ. The chain crosses the membrane as a helical span at residues 751 to 770; that stretch reads LLWVNLVTDGLPATALSFNP. Asparagine 755, threonine 758, and aspartate 759 together coordinate Ca(2+). Over 771–795 the chain is Cytoplasmic; it reads PDHDVMRRAPRKRDEPLVGGWLLFR. Residues 796 to 816 traverse the membrane as a helical segment; the sequence is YLAIGTYVGAATVFGYIWWFV. At 817 to 854 the chain is on the lumenal side; sequence YNPEGPQISFWQLSHFHKCSAQFPEIGCEMFSNEMSRS. A helical transmembrane segment spans residues 855–875; the sequence is ASTVSLSILVVIEMLNAMNAL. Glutamate 867 is a binding site for Ca(2+). At 876 to 891 the chain is on the cytoplasmic side; the sequence is SSSESLLAFPLWNNMM. Residues 892–912 traverse the membrane as a helical segment; the sequence is LVYAIILSMTLHFAILYIPFL. At 913-917 the chain is on the lumenal side; it reads QTLFS. A helical transmembrane segment spans residues 918 to 938; that stretch reads ILPLNWTEWKAVLAISAPVVA. The Cytoplasmic portion of the chain corresponds to 939–971; that stretch reads IDELLKYAERRLYTLPAIAGEQQNGVAFKPKKA.

It belongs to the cation transport ATPase (P-type) (TC 3.A.3) family. It depends on Mg(2+) as a cofactor.

Its subcellular location is the endoplasmic reticulum membrane. The enzyme catalyses Ca(2+)(in) + ATP + H2O = Ca(2+)(out) + ADP + phosphate + H(+). Magnesium-dependent enzyme catalyzes the hydrolysis of ATP coupled with the translocation of calcium from the cytosol to the endoplasmic reticulum lumen. Its activity is coupled to the unfolded protein response (UPR) and Ca(2+) import into the endoplasmioc reticulum is important for redox homeostasis, virulence, cell wall biosynthesis, and resistance to antifungal compounds that inhibit Ca2+ signaling. With pmrA, promotes radial growth and conidiation. This chain is Endoplasmic reticulum calcium ATPase srcA (srcA), found in Aspergillus fumigatus (strain ATCC MYA-4609 / CBS 101355 / FGSC A1100 / Af293) (Neosartorya fumigata).